The following is a 400-amino-acid chain: Elongation factor Tu (400 aa).

In terms of domain architecture, tr-type G spans 10-209 (KPHVNIGTIG…NVDAYIPTPE (200 aa)). The segment at 19–26 (GHVDHGKT) is G1. GTP is bound at residue 19–26 (GHVDHGKT). T26 is a binding site for Mg(2+). The G2 stretch occupies residues 60 to 64 (GITIN). The segment at 81 to 84 (DCPG) is G3. Residues 81–85 (DCPGH) and 136–139 (NKSD) contribute to the GTP site. A G4 region spans residues 136–139 (NKSD). The interval 174–176 (SGL) is G5.

Belongs to the TRAFAC class translation factor GTPase superfamily. Classic translation factor GTPase family. EF-Tu/EF-1A subfamily. As to quaternary structure, monomer.

Its subcellular location is the cytoplasm. The enzyme catalyses GTP + H2O = GDP + phosphate + H(+). GTP hydrolase that promotes the GTP-dependent binding of aminoacyl-tRNA to the A-site of ribosomes during protein biosynthesis. This chain is Elongation factor Tu, found in Desulforamulus reducens (strain ATCC BAA-1160 / DSM 100696 / MI-1) (Desulfotomaculum reducens).